The chain runs to 153 residues: Mitotic-spindle organizing protein 2 (153 aa).

Positions 80–153 (KVSETSTGDA…SSSSSQLTSN (74 aa)) are disordered. Composition is skewed to polar residues over residues 81-99 (VSET…TAVP) and 107-133 (KMSS…SATR). Positions 134-153 (GQKSTKSSGSSSSSSQLTSN) are enriched in low complexity.

The protein belongs to the MOZART2 family. In terms of assembly, part of the gamma-tubulin complex. Interacts with TUBG1.

It localises to the cytoplasm. The protein localises to the cytoskeleton. It is found in the microtubule organizing center. Its subcellular location is the centrosome. The protein resides in the spindle. The polypeptide is Mitotic-spindle organizing protein 2 (mzt2) (Danio rerio (Zebrafish)).